The following is a 337-amino-acid chain: 2-oxoglutarate receptor 1 (337 aa).

Topologically, residues 1-34 are extracellular; the sequence is MNEPLDYLANASDFPDYAAAFGNCTDENIPLKMH. N-linked (GlcNAc...) asparagine glycosylation is found at N10 and N23. The helical transmembrane segment at 35-55 threads the bilayer; that stretch reads YLPVIYGIIFLVGFPGNAVVI. Topologically, residues 56–69 are cytoplasmic; sequence STYIFKMRPWKSST. The helical transmembrane segment at 70 to 90 threads the bilayer; it reads IIMLNLACTDLLYLTSLPFLI. Topologically, residues 91–116 are extracellular; the sequence is HYYASGENWIFGDFMCKFIRFSFHFN. C106 and C183 are disulfide-bonded. Residues 117–137 form a helical membrane-spanning segment; the sequence is LYSSILFLTCFSIFRYCVIIH. Topologically, residues 138–151 are cytoplasmic; sequence PMSCFSIHKTRCAV. The chain crosses the membrane as a helical span at residues 152-172; that stretch reads VACAVVWIISLVAVIPMTFLI. Residues 173-201 lie on the Extracellular side of the membrane; sequence TSTNRTNRSACLDLTSSDELNTIKWYNLI. N-linked (GlcNAc...) asparagine glycosylation is found at N176 and N179. Residues 202–222 form a helical membrane-spanning segment; sequence LTATTFCLPLVIVTLCYTTII. The Cytoplasmic portion of the chain corresponds to 223–242; sequence HTLTHGLQTDSCLKQKARRL. A helical transmembrane segment spans residues 243–263; the sequence is TILLLLAFYVCFLPFHILRVI. At 264 to 284 the chain is on the extracellular side; the sequence is RIESRLLSISCSIENQIHEAY. Residues 285-305 form a helical membrane-spanning segment; that stretch reads IVSRPLAALNTFGNLLLYVVV. The Cytoplasmic portion of the chain corresponds to 306 to 337; that stretch reads SDNFQQAVCSTVRCKVSGNLEQAKKISYSNNP.

The protein belongs to the G-protein coupled receptor 1 family. Detected in kidney and, to a lower extent, in placenta. Not detected in brain tissues including the frontal cortex, caudate putamen, thalamus, hypothalamus, hippocampus or pons.

It localises to the cell membrane. Its function is as follows. G protein-coupled receptor for dicarboxylates and amino dicarboxylates. Receptor for itaconate, a metabolite produced by myeloid lineages. In the respiratory epithelium, couples the binding of itaconate to the activation of GNA11 and downstream intracellular Ca(2+) release, leading to mucocilliary clearance of airborne pathogens. Receptor for leukotriene E4 (LTE4) produced by mast cells upon allergic inflammation. Binds with high affinity to LTE4 and elicits mucin release from pulmonary epithelium in response to airborne fungi allergens. Regulates mucin-producing goblet cell homeostasis. Receptor for alpha-ketoglutarate produced by proximal tubule renal cells upon metabolic alkalosis. In an intrarenal paracrine signaling pathway, binds alpha-ketoglutarate and drives transepithelial salt reabsorption and bicarbonate secretion by SLC26A4/pendrin-positive intercalated cells. This chain is 2-oxoglutarate receptor 1 (OXGR1), found in Homo sapiens (Human).